Consider the following 114-residue polypeptide: Large ribosomal subunit protein uL22 (114 aa).

This sequence belongs to the universal ribosomal protein uL22 family. In terms of assembly, part of the 50S ribosomal subunit.

Its function is as follows. This protein binds specifically to 23S rRNA; its binding is stimulated by other ribosomal proteins, e.g. L4, L17, and L20. It is important during the early stages of 50S assembly. It makes multiple contacts with different domains of the 23S rRNA in the assembled 50S subunit and ribosome. Functionally, the globular domain of the protein is located near the polypeptide exit tunnel on the outside of the subunit, while an extended beta-hairpin is found that lines the wall of the exit tunnel in the center of the 70S ribosome. This is Large ribosomal subunit protein uL22 from Ehrlichia ruminantium (strain Gardel).